A 263-amino-acid polypeptide reads, in one-letter code: Hydroxyethylthiazole kinase (263 aa).

Residue M39 participates in substrate binding. ATP-binding residues include K115 and T160. G187 serves as a coordination point for substrate.

This sequence belongs to the Thz kinase family. Mg(2+) serves as cofactor.

It carries out the reaction 5-(2-hydroxyethyl)-4-methylthiazole + ATP = 4-methyl-5-(2-phosphooxyethyl)-thiazole + ADP + H(+). It functions in the pathway cofactor biosynthesis; thiamine diphosphate biosynthesis; 4-methyl-5-(2-phosphoethyl)-thiazole from 5-(2-hydroxyethyl)-4-methylthiazole: step 1/1. Catalyzes the phosphorylation of the hydroxyl group of 4-methyl-5-beta-hydroxyethylthiazole (THZ). This Staphylococcus aureus (strain bovine RF122 / ET3-1) protein is Hydroxyethylthiazole kinase.